We begin with the raw amino-acid sequence, 37 residues long: GDPTFCGETCRVIPVCTYSAALGCTCDDRSDGLCKRN.

Positions 1–37 form a cross-link, cyclopeptide (Gly-Asn); the sequence is GDPTFCGETCRVIPVCTYSAALGCTCDDRSDGLCKRN. Disulfide bonds link Cys6-Cys24, Cys10-Cys26, and Cys16-Cys34.

Belongs to the cyclotide family. Post-translationally, this is a cyclic peptide.

Probably participates in a plant defense mechanism. Inhibits the cytopathic effects of the human immunodeficiency virus. In Palicourea condensata (Cappel), this protein is Palicourein.